We begin with the raw amino-acid sequence, 700 residues long: Methionine--tRNA ligase (700 aa).

The short motif at 14–24 is the 'HIGH' region element; the sequence is PYANGPVHLGH. Zn(2+) is bound by residues Cys146, Cys149, Cys159, and Cys162. Positions 344-348 match the 'KMSKS' region motif; it reads KFSKS. Lys347 lines the ATP pocket. A tRNA-binding domain is found at 599-700; sequence DFLKVDLRVA…GEEINGRQIQ (102 aa).

This sequence belongs to the class-I aminoacyl-tRNA synthetase family. MetG type 1 subfamily. In terms of assembly, homodimer. The cofactor is Zn(2+).

The protein localises to the cytoplasm. The enzyme catalyses tRNA(Met) + L-methionine + ATP = L-methionyl-tRNA(Met) + AMP + diphosphate. Its function is as follows. Is required not only for elongation of protein synthesis but also for the initiation of all mRNA translation through initiator tRNA(fMet) aminoacylation. The chain is Methionine--tRNA ligase from Pelodictyon phaeoclathratiforme (strain DSM 5477 / BU-1).